The chain runs to 1158 residues: Phospholipid-transporting ATPase 1 (1158 aa).

A compositionally biased stretch (basic and acidic residues) spans 1 to 15 (MDPRKSIDKPPHHDP). A disordered region spans residues 1-30 (MDPRKSIDKPPHHDPILGVSSRWSVSSKDN). The Cytoplasmic segment spans residues 1 to 100 (MDPRKSIDKP…TAKYSVFTFL (100 aa)). The helical transmembrane segment at 101 to 122 (PRNLFEQFHRVAYIYFLVIAVL) threads the bilayer. Topologically, residues 123–127 (NQLPQ) are extracellular. A helical membrane pass occupies residues 128–150 (LAVFGRGASIMPLAFVLLVSAIK). Topologically, residues 151 to 329 (DAYEDFRRHR…SRLETRMNLE (179 aa)) are cytoplasmic. A helical transmembrane segment spans residues 330–351 (IILLSLFLIVLCTIAAATAAVW). The Extracellular portion of the chain corresponds to 352–391 (LRTHRDDLDTILFYRRKDYSERPGGKNYKYYGWGWEIFFT). The chain crosses the membrane as a helical span at residues 392 to 409 (FFMAVIVYQIMIPISLYI). Topologically, residues 410 to 914 (SMELVRIGQA…HGHWNYQRMG (505 aa)) are cytoplasmic. D457 functions as the 4-aspartylphosphate intermediate in the catalytic mechanism. 2 residues coordinate Mg(2+): D859 and D863. A helical transmembrane segment spans residues 915–934 (YMILYNFYRNAVFVLILFWY). Residues 935–948 (VLFTCYTLTTAITE) are Extracellular-facing. Residues 949-968 (WSSVLYSVIYTAIPTIIIGI) form a helical membrane-spanning segment. Over 969–998 (LDKDLGRQTLLDHPQLYGVGQRAEGYSTTL) the chain is Cytoplasmic. Residues 999 to 1020 (FWYTMIDTIWQSAAIFFIPMFA) form a helical membrane-spanning segment. At 1021–1027 (YWGSTID) the chain is on the extracellular side. A helical membrane pass occupies residues 1028–1050 (TSSLGDLWTIAAVVVVNLHLAMD). At 1051–1056 (VIRWNW) the chain is on the cytoplasmic side. A helical transmembrane segment spans residues 1057–1077 (ITHAAIWGSIVAACICVIVID). Topologically, residues 1078–1090 (VIPTLPGYWAIFQ) are extracellular. A helical transmembrane segment spans residues 1091-1115 (VGKTWMFWFCLLAIVVTSLLPRFAI). Over 1116 to 1158 (KFLVEYYRPSDVRIAREAEKLGTFRESQPVGVEMNLIQDPPRR) the chain is Cytoplasmic.

Belongs to the cation transport ATPase (P-type) (TC 3.A.3) family. Type IV subfamily. Expressed in roots, flowers, anthers, leaves, vascular tissues and stems.

It localises to the endoplasmic reticulum membrane. It is found in the cell membrane. It carries out the reaction ATP + H2O + phospholipidSide 1 = ADP + phosphate + phospholipidSide 2.. Involved in transport of phospholipids. Contributes to transmembrane flipping of lipids. Has activity with phosphatidylserine and with a much lower efficiency with phosphatidylethanolamine, but not with phosphatidylcholine. The protein is Phospholipid-transporting ATPase 1 of Arabidopsis thaliana (Mouse-ear cress).